A 227-amino-acid chain; its full sequence is PKHD-type hydroxylase PHZ_c0292 (227 aa).

In terms of domain architecture, Fe2OG dioxygenase spans 78–178 (VVFPPLFNRY…RVCSFFWIQS (101 aa)). Fe cation is bound by residues histidine 96, aspartate 98, and histidine 159. Residue arginine 169 participates in 2-oxoglutarate binding.

Fe(2+) is required as a cofactor. The cofactor is L-ascorbate.

This Phenylobacterium zucineum (strain HLK1) protein is PKHD-type hydroxylase PHZ_c0292.